We begin with the raw amino-acid sequence, 87 residues long: Small ribosomal subunit protein bS20 (87 aa).

It belongs to the bacterial ribosomal protein bS20 family.

Binds directly to 16S ribosomal RNA. The sequence is that of Small ribosomal subunit protein bS20 from Shigella flexneri.